Here is a 249-residue protein sequence, read N- to C-terminus: Triosephosphate isomerase (249 aa).

9–11 (NWK) lines the substrate pocket. His91 (electrophile) is an active-site residue. Glu163 functions as the Proton acceptor in the catalytic mechanism. Substrate-binding positions include Gly169, Ser209, and 230–231 (GG).

It belongs to the triosephosphate isomerase family. Homodimer.

The protein resides in the cytoplasm. The enzyme catalyses D-glyceraldehyde 3-phosphate = dihydroxyacetone phosphate. The protein operates within carbohydrate biosynthesis; gluconeogenesis. It participates in carbohydrate degradation; glycolysis; D-glyceraldehyde 3-phosphate from glycerone phosphate: step 1/1. In terms of biological role, involved in the gluconeogenesis. Catalyzes stereospecifically the conversion of dihydroxyacetone phosphate (DHAP) to D-glyceraldehyde-3-phosphate (G3P). The protein is Triosephosphate isomerase of Halorhodospira halophila (strain DSM 244 / SL1) (Ectothiorhodospira halophila (strain DSM 244 / SL1)).